Consider the following 93-residue polypeptide: MADIMDIKSILYTEKSLGLQEKGVLVVQTAQNVTKNQLKEVFKTYFGFEPLKINSLKQEGKVKRFRGKLGQRKSFKKFYVKVPEGASIAALGA.

The protein belongs to the universal ribosomal protein uL23 family. In terms of assembly, part of the 50S ribosomal subunit. Contacts protein L29, and trigger factor when it is bound to the ribosome.

Functionally, one of the early assembly proteins it binds 23S rRNA. One of the proteins that surrounds the polypeptide exit tunnel on the outside of the ribosome. Forms the main docking site for trigger factor binding to the ribosome. In Helicobacter pylori (strain P12), this protein is Large ribosomal subunit protein uL23.